A 573-amino-acid polypeptide reads, in one-letter code: Protein FAM227B (573 aa).

Residues 429–485 (DNKKDFKRVKQRIKDDIKFLKEQQEQIDKELDRLQAKASKNLQEVKNDFENFLHKLR) are a coiled coil. A compositionally biased stretch (low complexity) spans 497–521 (SASPSESLQSLQSPNSSLSSPAMSE). A disordered region spans residues 497–528 (SASPSESLQSLQSPNSSLSSPAMSEDFNSVEE).

It belongs to the FAM227 family.

The protein is Protein FAM227B (Fam227b) of Rattus norvegicus (Rat).